The following is a 211-amino-acid chain: B3 domain-containing protein At5g42700 (211 aa).

The TF-B3 DNA-binding region spans 110 to 201; sequence FVKSMLQSHV…AFKVYITRVG (92 aa).

It is found in the nucleus. This Arabidopsis thaliana (Mouse-ear cress) protein is B3 domain-containing protein At5g42700.